We begin with the raw amino-acid sequence, 399 residues long: Dual-specificity RNA methyltransferase RlmN (399 aa).

Glu-116 (proton acceptor) is an active-site residue. Residues 122-352 (SEDRLTLCIS…VLLRRSMGRD (231 aa)) form the Radical SAM core domain. Cys-129 and Cys-357 are oxidised to a cystine. Residues Cys-136, Cys-140, and Cys-143 each contribute to the [4Fe-4S] cluster site. S-adenosyl-L-methionine is bound by residues 185–186 (GE), Ser-217, 238–240 (SLN), and Asn-314. Residue Cys-357 is the S-methylcysteine intermediate of the active site.

Belongs to the radical SAM superfamily. RlmN family. The cofactor is [4Fe-4S] cluster.

Its subcellular location is the cytoplasm. The enzyme catalyses adenosine(2503) in 23S rRNA + 2 reduced [2Fe-2S]-[ferredoxin] + 2 S-adenosyl-L-methionine = 2-methyladenosine(2503) in 23S rRNA + 5'-deoxyadenosine + L-methionine + 2 oxidized [2Fe-2S]-[ferredoxin] + S-adenosyl-L-homocysteine. It catalyses the reaction adenosine(37) in tRNA + 2 reduced [2Fe-2S]-[ferredoxin] + 2 S-adenosyl-L-methionine = 2-methyladenosine(37) in tRNA + 5'-deoxyadenosine + L-methionine + 2 oxidized [2Fe-2S]-[ferredoxin] + S-adenosyl-L-homocysteine. Specifically methylates position 2 of adenine 2503 in 23S rRNA and position 2 of adenine 37 in tRNAs. m2A2503 modification seems to play a crucial role in the proofreading step occurring at the peptidyl transferase center and thus would serve to optimize ribosomal fidelity. This chain is Dual-specificity RNA methyltransferase RlmN, found in Bdellovibrio bacteriovorus (strain ATCC 15356 / DSM 50701 / NCIMB 9529 / HD100).